The following is a 129-amino-acid chain: Cytochrome c-type protein SHP (129 aa).

The signal sequence occupies residues 1–17 (MTRFLILSAVLAGPALA). 3 residues coordinate heme c: Cys-60, Cys-63, and His-64. Residues Cys-106 and Cys-114 are joined by a disulfide bond.

Post-translationally, binds 1 heme c group covalently per subunit.

In terms of biological role, high-spin cytochrome. Transiently bind oxygen during autoxidation, which occurs with a half-life of 3 minutes with a 4-fold excess of O(2). Also binds carbon monoxide, azide and cyanide. This chain is Cytochrome c-type protein SHP (shp), found in Cereibacter sphaeroides (strain ATCC 17023 / DSM 158 / JCM 6121 / CCUG 31486 / LMG 2827 / NBRC 12203 / NCIMB 8253 / ATH 2.4.1.) (Rhodobacter sphaeroides).